We begin with the raw amino-acid sequence, 159 residues long: Large ribosomal subunit protein eL24 (159 aa).

Positions 118 to 159 (ANKAVRAAKAAANKEKKASQPKTQQKTAKNVKTAAPRVGGKR) are disordered. Residues 137 to 147 (QPKTQQKTAKN) are compositionally biased toward polar residues.

It belongs to the eukaryotic ribosomal protein eL24 family.

This is Large ribosomal subunit protein eL24 from Caenorhabditis elegans.